The primary structure comprises 274 residues: 2,3,4,5-tetrahydropyridine-2,6-dicarboxylate N-succinyltransferase (274 aa).

Substrate-binding residues include Arg-104 and Asp-141.

The protein belongs to the transferase hexapeptide repeat family. Homotrimer.

It localises to the cytoplasm. The enzyme catalyses (S)-2,3,4,5-tetrahydrodipicolinate + succinyl-CoA + H2O = (S)-2-succinylamino-6-oxoheptanedioate + CoA. The protein operates within amino-acid biosynthesis; L-lysine biosynthesis via DAP pathway; LL-2,6-diaminopimelate from (S)-tetrahydrodipicolinate (succinylase route): step 1/3. This is 2,3,4,5-tetrahydropyridine-2,6-dicarboxylate N-succinyltransferase from Shewanella denitrificans (strain OS217 / ATCC BAA-1090 / DSM 15013).